Here is a 307-residue protein sequence, read N- to C-terminus: Ubiquitin recognition factor in ER-associated degradation protein 1 (307 aa).

M1 carries the post-translational modification N-acetylmethionine. A phosphoserine mark is found at S129, S231, S245, S247, and S299. Disordered regions lie at residues 230–255 and 282–307; these read GSGN…GDIK and EEDE…GRKP.

It belongs to the UFD1 family. As to quaternary structure, interacts with USP13. Heterodimer with NPLOC4, this heterodimer binds VCP and inhibits Golgi membrane fusion. Interacts with ZFAND2B; probably through VCP.

Its subcellular location is the nucleus. The protein localises to the cytoplasm. It is found in the cytosol. It participates in protein degradation; proteasomal ubiquitin-dependent pathway. Its function is as follows. Essential component of the ubiquitin-dependent proteolytic pathway which degrades ubiquitin fusion proteins. The ternary complex containing UFD1, VCP and NPLOC4 binds ubiquitinated proteins and is necessary for the export of misfolded proteins from the ER to the cytoplasm, where they are degraded by the proteasome. The NPLOC4-UFD1-VCP complex regulates spindle disassembly at the end of mitosis and is necessary for the formation of a closed nuclear envelope. It may be involved in the development of some ectoderm-derived structures. Acts as a negative regulator of type I interferon production via the complex formed with VCP and NPLOC4, which binds to RIGI and recruits RNF125 to promote ubiquitination and degradation of RIGI. The sequence is that of Ubiquitin recognition factor in ER-associated degradation protein 1 from Rattus norvegicus (Rat).